Here is a 511-residue protein sequence, read N- to C-terminus: Signal transduction histidine-protein kinase/phosphatase MprB (511 aa).

Over 1–26 the chain is Cytoplasmic; the sequence is MVGFRRGPRAPLRATSSLSLRWRVML. Residues 27 to 47 form a helical membrane-spanning segment; that stretch reads LAMSMVAMVVVLMSFAVYAVI. Residues 48–163 lie on the Extracellular side of the membrane; the sequence is SAALYSDIDN…PTEAVMTKLR (116 aa). The helical transmembrane segment at 164–184 threads the bilayer; that stretch reads AVLLIVGGVGVAVAAVAGGMV. Over 185-511 the chain is Cytoplasmic; sequence TRAGLRPVGR…SVDSQSARAR (327 aa). One can recognise an HAMP domain in the interval 186-238; sequence RAGLRPVGRLTEAAERVARTDDLRPIPVFGSDELARLTEAFNLMLRALAESRE. Positions 246 to 466 constitute a Histidine kinase domain; the sequence is DAGHELRTPL…AICMLLPGRP (221 aa). The residue at position 249 (His249) is a Phosphohistidine; by autocatalysis. The disordered stretch occupies residues 468 to 511; the sequence is PDSAYPAAPDDKKTEPVDTRGANGANSRGSANVISVDSQSARAR. Over residues 476–485 the composition is skewed to basic and acidic residues; that stretch reads PDDKKTEPVD. The segment covering 491–511 has biased composition (polar residues); that stretch reads GANSRGSANVISVDSQSARAR.

It depends on Mg(2+) as a cofactor. Requires Mn(2+) as cofactor. In terms of processing, autophosphorylated.

The protein localises to the cell membrane. It carries out the reaction ATP + protein L-histidine = ADP + protein N-phospho-L-histidine.. Functionally, member of the two-component regulatory system MprB/MprA which contributes to maintaining a balance among several systems involved in stress resistance and is required for establishment and maintenance of persistent infection in the host. In response to environmental signals MprB acts both as a membrane-associated protein kinase that undergoes autophosphorylation and subsequently transfers the phosphate to MprA, and a protein phosphatase that dephosphorylates phospho-MprA. This Mycobacterium ulcerans (strain Agy99) protein is Signal transduction histidine-protein kinase/phosphatase MprB (mprB).